The following is a 40-amino-acid chain: Photosystem II reaction center protein Y (40 aa).

A helical transmembrane segment spans residues 4–22; that stretch reads LLVITLPILAAIGWVTLNI.

It belongs to the PsbY family. PSII is composed of 1 copy each of membrane proteins PsbA, PsbB, PsbC, PsbD, PsbE, PsbF, PsbH, PsbI, PsbJ, PsbK, PsbL, PsbM, PsbT, PsbX, PsbY, Psb30/Ycf12, peripheral proteins PsbO, CyanoQ (PsbQ), PsbU, PsbV and a large number of cofactors. It forms dimeric complexes.

The protein localises to the cellular thylakoid membrane. Functionally, loosely associated component of the core of photosystem II (PSII), it is not always seen in crystals. PSII is a light-driven water plastoquinone oxidoreductase, using light energy to abstract electrons from H(2)O, generating a proton gradient subsequently used for ATP formation. The polypeptide is Photosystem II reaction center protein Y (Prochlorococcus marinus (strain SARG / CCMP1375 / SS120)).